The primary structure comprises 261 residues: Homeobox-leucine zipper protein HOX24 (261 aa).

2 disordered regions span residues 42–67 and 160–188; these read AAAAGRGGGDGDGGGGGGGGGERKRR and KLNERQDQSGSCDGGGAEGDDDDKRNSVM. The span at 46-61 shows a compositional bias: gly residues; that stretch reads GRGGGDGDGGGGGGGG. The segment at residues 61–121 is a DNA-binding region (homeobox); that stretch reads GGERKRRFTE…NKRARWRSKQ (61 aa). The interval 120 to 164 is leucine-zipper; the sequence is KQIEHDYAALRAQYDALHARVESLRQEKLALADQVDELRGKLNER.

It belongs to the HD-ZIP homeobox family. Class I subfamily. Expressed in roots and panicles.

It localises to the nucleus. Probable transcription factor. The chain is Homeobox-leucine zipper protein HOX24 (HOX24) from Oryza sativa subsp. japonica (Rice).